The primary structure comprises 227 residues: MSTNLCPNASSSDIQPILYSYWRSSCSWRVRIAMNLKEIPYDIKPISLIKSGGEQHCNEYREVNPMEQVPALQIDGHTLIESVAIMHYLEETRPQRPLLPQDVHKRAKVREIVEIICSGIQPLQNLIVLIHVGEEKKKEWAQHWITRGFRAVEKALSTSAGKYCVGDEISMADCCLVPQVFNARRFHVDLRPYPIILRIDRELESNPAFRAAHPSNQPDCPPELPNK.

Positions 14–97 (IQPILYSYWR…YLEETRPQRP (84 aa)) constitute a GST N-terminal domain. Glutathione-binding positions include 24–29 (SSCSWR), Gln55, Val69, 81–82 (ES), Gln121, and 125–127 (NLI). Residues 102–222 (DVHKRAKVRE…HPSNQPDCPP (121 aa)) form the GST C-terminal domain.

This sequence belongs to the GST superfamily. Zeta family. It depends on glutathione as a cofactor.

It is found in the cytoplasm. It catalyses the reaction 4-maleylacetoacetate = 4-fumarylacetoacetate. The enzyme catalyses RX + glutathione = an S-substituted glutathione + a halide anion + H(+). It participates in amino-acid degradation; L-phenylalanine degradation; acetoacetate and fumarate from L-phenylalanine: step 5/6. In terms of biological role, catalyzes the glutathione dependent oxygenation of dichloroacetic acid to glyoxylic acid in vitro. Has no glutathione thioltransferase activity with 4-hydroxynonenal (4-HNE), adrenochrome, phenethyl isothiocyanate (PEITC), 5-hydroperoxyeicosatetraenoic acid ((5S)-HpETE), prostaglandin A2 (PGA2) or 2-hydroxyethyldisulfide (HED). The polypeptide is Probable maleylacetoacetate isomerase 2 (GstZ2) (Drosophila melanogaster (Fruit fly)).